A 317-amino-acid chain; its full sequence is Transaldolase (317 aa).

Lysine 126 functions as the Schiff-base intermediate with substrate in the catalytic mechanism.

The protein belongs to the transaldolase family. Type 1 subfamily. As to quaternary structure, homodimer.

The protein localises to the cytoplasm. It carries out the reaction D-sedoheptulose 7-phosphate + D-glyceraldehyde 3-phosphate = D-erythrose 4-phosphate + beta-D-fructose 6-phosphate. Its pathway is carbohydrate degradation; pentose phosphate pathway; D-glyceraldehyde 3-phosphate and beta-D-fructose 6-phosphate from D-ribose 5-phosphate and D-xylulose 5-phosphate (non-oxidative stage): step 2/3. Functionally, transaldolase is important for the balance of metabolites in the pentose-phosphate pathway. The protein is Transaldolase of Burkholderia ambifaria (strain MC40-6).